Consider the following 668-residue polypeptide: UvrABC system protein C (668 aa).

A GIY-YIG domain is found at aspartate 14–isoleucine 91. The 36-residue stretch at lysine 196–leucine 231 folds into the UVR domain.

This sequence belongs to the UvrC family. In terms of assembly, interacts with UvrB in an incision complex.

The protein localises to the cytoplasm. The UvrABC repair system catalyzes the recognition and processing of DNA lesions. UvrC both incises the 5' and 3' sides of the lesion. The N-terminal half is responsible for the 3' incision and the C-terminal half is responsible for the 5' incision. The sequence is that of UvrABC system protein C from Lactococcus lactis subsp. lactis (strain IL1403) (Streptococcus lactis).